Consider the following 62-residue polypeptide: MAKVCYFTGRKTVSGNNRSHAMNKTKRVVKPNLQKVTVLIDGKPKKVWASARALKSGKVERV.

It belongs to the bacterial ribosomal protein bL28 family.

The protein is Large ribosomal subunit protein bL28 of Streptococcus thermophilus (strain CNRZ 1066).